A 220-amino-acid chain; its full sequence is Uracil-DNA glycosylase 1 (220 aa).

Asp65 acts as the Proton acceptor in catalysis.

The protein belongs to the uracil-DNA glycosylase (UDG) superfamily. UNG family.

It localises to the cytoplasm. The catalysed reaction is Hydrolyzes single-stranded DNA or mismatched double-stranded DNA and polynucleotides, releasing free uracil.. Its function is as follows. Excises uracil residues from the DNA which can arise as a result of misincorporation of dUMP residues by DNA polymerase or due to deamination of cytosine. The protein is Uracil-DNA glycosylase 1 of Bacteroides fragilis (strain YCH46).